Reading from the N-terminus, the 185-residue chain is Ribonuclease HII (185 aa).

Positions 1–185 constitute an RNase H type-2 domain; the sequence is MIILGIDEAG…KSYKPIQLLL (185 aa). Positions 7, 8, and 99 each coordinate a divalent metal cation.

It belongs to the RNase HII family. The cofactor is Mn(2+). Mg(2+) is required as a cofactor.

It is found in the cytoplasm. The enzyme catalyses Endonucleolytic cleavage to 5'-phosphomonoester.. Endonuclease that specifically degrades the RNA of RNA-DNA hybrids. This Francisella tularensis subsp. novicida (strain U112) protein is Ribonuclease HII.